Reading from the N-terminus, the 84-residue chain is Beta-mammal Tt1g (84 aa).

Residues Met1–Cys20 form the signal peptide. The LCN-type CS-alpha/beta domain maps to Lys21–Gly82. Intrachain disulfides connect Cys31–Cys81, Cys35–Cys57, Cys43–Cys62, and Cys47–Cys64. Cys81 carries the cysteine amide modification.

This sequence belongs to the long (4 C-C) scorpion toxin superfamily. Sodium channel inhibitor family. Beta subfamily. Expressed by the venom gland.

The protein localises to the secreted. Functionally, beta toxins modify sodium channel function in two ways: an excitatory effect (shifting the activation process to more negative potential) and/or a depressant effect (reducing the peak current). At concentration of 500 nM this toxin produces channel opening at more negative potentials in hNav1.2/SCN2A and hNav1.3/SCN3A, which shows the biggest effect. On the other hand the peak current is decreased in hNav1.4/SCN4A and hNav1.5/SCN5A channels, without apparent modification of the activation gate. This toxin is active against mammals. In Tityus trivittatus (Argentinean scorpion), this protein is Beta-mammal Tt1g.